A 216-amino-acid polypeptide reads, in one-letter code: Penicillin-binding protein activator LpoB (216 aa).

The signal sequence occupies residues 1–20; it reads MIKNLSRYALVTAFALFLSG. Residue Cys21 is the site of N-palmitoyl cysteine attachment. Residue Cys21 is the site of S-diacylglycerol cysteine attachment. The segment at 28 to 77 is disordered; the sequence is QPAPVDEAKPGTEQPAQPTQPVPTVPSVPTVPAQPGPIEHPDQTSQPAPR.

It belongs to the LpoB family. In terms of assembly, interacts with PBP1b.

It is found in the cell outer membrane. Its function is as follows. Regulator of peptidoglycan synthesis that is essential for the function of penicillin-binding protein 1B (PBP1b). This chain is Penicillin-binding protein activator LpoB, found in Enterobacter sp. (strain 638).